Consider the following 142-residue polypeptide: MSFFRGTFSTSSLFINTVDSVTKRFATKKSAGSTKNGRTSQPKNLGLKKSGNQLVYPGEIIIRQRGTEFHPGTFVGMGKDHTIFSKTIGLVSFSKEPKFPGSKKTRRFISVAPLYTNNININTNIDTSIDTNVNNNNSNINI.

A disordered region spans residues Thr27–Lys48. Polar residues predominate over residues Ser30–Lys43.

Belongs to the bacterial ribosomal protein bL27 family.

Its subcellular location is the mitochondrion. This is Large ribosomal subunit protein bL27m (mrpl27) from Dictyostelium discoideum (Social amoeba).